We begin with the raw amino-acid sequence, 37 residues long: Cytochrome b6-f complex subunit 5 (37 aa).

A helical transmembrane segment spans residues L5 to A25.

This sequence belongs to the PetG family. The 4 large subunits of the cytochrome b6-f complex are cytochrome b6, subunit IV (17 kDa polypeptide, PetD), cytochrome f and the Rieske protein, while the 4 small subunits are PetG, PetL, PetM and PetN. The complex functions as a dimer.

It is found in the plastid. The protein localises to the chloroplast thylakoid membrane. Its function is as follows. Component of the cytochrome b6-f complex, which mediates electron transfer between photosystem II (PSII) and photosystem I (PSI), cyclic electron flow around PSI, and state transitions. PetG is required for either the stability or assembly of the cytochrome b6-f complex. In Welwitschia mirabilis (Tree tumbo), this protein is Cytochrome b6-f complex subunit 5.